The chain runs to 216 residues: Octanoyltransferase (216 aa).

The 189-residue stretch at 24 to 212 folds into the BPL/LPL catalytic domain; it reads KFRKECILFL…NLCSFLEPIN (189 aa). Substrate contacts are provided by residues 69-76, 140-142, and 153-155; these read RGGDFTAH, SIG, and GIA. The active-site Acyl-thioester intermediate is Cys171.

The protein belongs to the LipB family.

It is found in the cytoplasm. It catalyses the reaction octanoyl-[ACP] + L-lysyl-[protein] = N(6)-octanoyl-L-lysyl-[protein] + holo-[ACP] + H(+). The protein operates within protein modification; protein lipoylation via endogenous pathway; protein N(6)-(lipoyl)lysine from octanoyl-[acyl-carrier-protein]: step 1/2. In terms of biological role, catalyzes the transfer of endogenously produced octanoic acid from octanoyl-acyl-carrier-protein onto the lipoyl domains of lipoate-dependent enzymes. Lipoyl-ACP can also act as a substrate although octanoyl-ACP is likely to be the physiological substrate. The protein is Octanoyltransferase of Leptospira interrogans serogroup Icterohaemorrhagiae serovar copenhageni (strain Fiocruz L1-130).